Consider the following 312-residue polypeptide: Phosphoribosylglycinamide formyltransferase, chloroplastic (312 aa).

A chloroplast-targeting transit peptide spans 1 to 73 (MEAQQIISRF…EVCSSSWRIW (73 aa)). Residue 109–111 (GSN) participates in N(1)-(5-phospho-beta-D-ribosyl)glycinamide binding. (6R)-10-formyltetrahydrofolate contacts are provided by residues Lys-162, 187-190 (LKLI), and Asn-204. Catalysis depends on His-206, which acts as the Proton donor. Residue Asp-247 coordinates (6R)-10-formyltetrahydrofolate. A N(1)-(5-phospho-beta-D-ribosyl)glycinamide-binding site is contributed by Glu-276.

The protein belongs to the GART family.

It localises to the plastid. It is found in the chloroplast. It carries out the reaction N(1)-(5-phospho-beta-D-ribosyl)glycinamide + (6R)-10-formyltetrahydrofolate = N(2)-formyl-N(1)-(5-phospho-beta-D-ribosyl)glycinamide + (6S)-5,6,7,8-tetrahydrofolate + H(+). It functions in the pathway purine metabolism; IMP biosynthesis via de novo pathway; N(2)-formyl-N(1)-(5-phospho-D-ribosyl)glycinamide from N(1)-(5-phospho-D-ribosyl)glycinamide (10-formyl THF route): step 1/1. In Vigna unguiculata (Cowpea), this protein is Phosphoribosylglycinamide formyltransferase, chloroplastic (PUR3).